The following is a 334-amino-acid chain: Dihydroorotate dehydrogenase (quinone) (334 aa).

Residues 61–65 (AGLDK) and T85 contribute to the FMN site. K65 lines the substrate pocket. 110-114 (NRMGF) contributes to the substrate binding site. The FMN site is built by N138 and N171. Residue N171 coordinates substrate. S174 functions as the Nucleophile in the catalytic mechanism. Residue N176 coordinates substrate. Residues K216 and T244 each coordinate FMN. Residue 245–246 (NT) coordinates substrate. Residues G266, G295, and 316–317 (YT) contribute to the FMN site.

This sequence belongs to the dihydroorotate dehydrogenase family. Type 2 subfamily. Monomer. Requires FMN as cofactor.

Its subcellular location is the cell membrane. The enzyme catalyses (S)-dihydroorotate + a quinone = orotate + a quinol. Its pathway is pyrimidine metabolism; UMP biosynthesis via de novo pathway; orotate from (S)-dihydroorotate (quinone route): step 1/1. Catalyzes the conversion of dihydroorotate to orotate with quinone as electron acceptor. The sequence is that of Dihydroorotate dehydrogenase (quinone) from Idiomarina loihiensis (strain ATCC BAA-735 / DSM 15497 / L2-TR).